The sequence spans 118 residues: Large ribosomal subunit protein uL22 (118 aa).

Belongs to the universal ribosomal protein uL22 family. As to quaternary structure, part of the 50S ribosomal subunit.

Its function is as follows. This protein binds specifically to 23S rRNA; its binding is stimulated by other ribosomal proteins, e.g. L4, L17, and L20. It is important during the early stages of 50S assembly. It makes multiple contacts with different domains of the 23S rRNA in the assembled 50S subunit and ribosome. Functionally, the globular domain of the protein is located near the polypeptide exit tunnel on the outside of the subunit, while an extended beta-hairpin is found that lines the wall of the exit tunnel in the center of the 70S ribosome. In Nostoc punctiforme (strain ATCC 29133 / PCC 73102), this protein is Large ribosomal subunit protein uL22.